The primary structure comprises 249 residues: Triosephosphate isomerase (249 aa).

Position 8–10 (8–10) interacts with substrate; it reads NWK. The active-site Electrophile is H95. The active-site Proton acceptor is the E166. Substrate-binding positions include G172, S211, and 232 to 233; that span reads GG.

The protein belongs to the triosephosphate isomerase family. Homodimer.

It localises to the cytoplasm. It carries out the reaction D-glyceraldehyde 3-phosphate = dihydroxyacetone phosphate. It functions in the pathway carbohydrate biosynthesis; gluconeogenesis. It participates in carbohydrate degradation; glycolysis; D-glyceraldehyde 3-phosphate from glycerone phosphate: step 1/1. Functionally, involved in the gluconeogenesis. Catalyzes stereospecifically the conversion of dihydroxyacetone phosphate (DHAP) to D-glyceraldehyde-3-phosphate (G3P). The chain is Triosephosphate isomerase from Granulibacter bethesdensis (strain ATCC BAA-1260 / CGDNIH1).